The chain runs to 530 residues: uncharacterized protein (530 aa).

Composition is skewed to polar residues over residues 60–74 (LNES…SSTP) and 92–103 (GQGTSRPLPTLS). 2 disordered regions span residues 60-103 (LNES…PTLS) and 121-155 (ASST…GLGN). A compositionally biased stretch (basic and acidic residues) spans 131 to 142 (PDPRDAPREGSF).

This is an uncharacterized protein from Mus musculus (Mouse).